The following is a 59-amino-acid chain: MADLKVTQIKSSIGAKKNQRDSLRTLGLRGIRKSVVREDNPQNRGLINVVRHLVTVEEV.

It belongs to the universal ribosomal protein uL30 family. In terms of assembly, part of the 50S ribosomal subunit.

The protein is Large ribosomal subunit protein uL30 of Nocardia farcinica (strain IFM 10152).